The following is a 351-amino-acid chain: UDP-3-O-acylglucosamine N-acyltransferase (351 aa).

Histidine 240 serves as the catalytic Proton acceptor.

The protein belongs to the transferase hexapeptide repeat family. LpxD subfamily. In terms of assembly, homotrimer.

It catalyses the reaction a UDP-3-O-[(3R)-3-hydroxyacyl]-alpha-D-glucosamine + a (3R)-hydroxyacyl-[ACP] = a UDP-2-N,3-O-bis[(3R)-3-hydroxyacyl]-alpha-D-glucosamine + holo-[ACP] + H(+). It functions in the pathway bacterial outer membrane biogenesis; LPS lipid A biosynthesis. Functionally, catalyzes the N-acylation of UDP-3-O-acylglucosamine using 3-hydroxyacyl-ACP as the acyl donor. Is involved in the biosynthesis of lipid A, a phosphorylated glycolipid that anchors the lipopolysaccharide to the outer membrane of the cell. The protein is UDP-3-O-acylglucosamine N-acyltransferase of Methylacidiphilum infernorum (isolate V4) (Methylokorus infernorum (strain V4)).